Consider the following 2546-residue polypeptide: Formin-J (2546 aa).

13 disordered regions span residues Met-1–Lys-40, Glu-61–Glu-108, Lys-188–Ala-270, Thr-369–Ser-414, Thr-502–Ser-541, Ser-802–Lys-849, Thr-879–Asn-898, Thr-987–Gly-1101, Pro-1485–Ser-1529, Lys-1558–Pro-1601, Ile-1659–Ser-1775, Val-1840–Ser-1869, and Ser-2014–Glu-2033. Composition is skewed to low complexity over residues Asn-16–Ser-37 and Asn-62–Ser-98. Composition is skewed to polar residues over residues Gly-99 to Glu-108 and Lys-188 to Pro-198. 2 stretches are compositionally biased toward low complexity: residues Asn-203–Asn-237 and Asn-247–Ala-270. The segment covering Ala-377 to Ile-389 has biased composition (polar residues). Composition is skewed to low complexity over residues Ser-390 to Ser-414 and Thr-502 to Ile-513. The region spanning Thr-391–Leu-444 is the FHA domain. The GBD/FH3 domain maps to Lys-457–Gln-963. Composition is skewed to polar residues over residues Thr-879–Leu-891 and Ser-992–Pro-1007. Residues Val-1033–Gly-1042 show a composition bias toward pro residues. The span at Gly-1043–Gly-1056 shows a compositional bias: low complexity. Over residues Gly-1057–Ile-1097 the composition is skewed to pro residues. Residues Ser-1072–Gly-1098 enclose the FH1 domain. One can recognise an FH2 domain in the interval Lys-1106–Asn-1495. Over residues Glu-1492–Asp-1502 the composition is skewed to polar residues. Over residues Ser-1507 to Ser-1529 the composition is skewed to low complexity. The region spanning Glu-1563–Asp-1593 is the DAD domain. The segment covering Ser-1665–Ser-1679 has biased composition (low complexity). Over residues His-1687–Thr-1717 the composition is skewed to basic and acidic residues. Residues Lys-1732–Lys-1745 show a composition bias toward low complexity. Residues Gln-1746–Ser-1757 show a composition bias toward polar residues. Low complexity-rich tracts occupy residues Arg-1763–Ser-1775 and Pro-1841–Thr-1853. The stretch at Ile-2067–Gln-2118 forms a coiled coil. The span at Gln-2121–Gln-2154 shows a compositional bias: low complexity. 3 disordered regions span residues Gln-2121–Val-2369, Ser-2381–Ser-2473, and Ser-2485–Pro-2510. The span at Gln-2160–Tyr-2179 shows a compositional bias: polar residues. 2 stretches are compositionally biased toward low complexity: residues Ala-2188–Ser-2206 and Ser-2237–Ser-2256. Residues Thr-2274–Thr-2287 are compositionally biased toward polar residues. A compositionally biased stretch (low complexity) spans Ser-2302–Ser-2315. Over residues Phe-2332–Ser-2342 the composition is skewed to basic residues. 3 stretches are compositionally biased toward low complexity: residues Val-2388 to Ser-2439, Asn-2459 to Ser-2473, and Ser-2485 to Pro-2497. Over residues Ala-2499–Lys-2508 the composition is skewed to polar residues.

The protein belongs to the formin homology family. Diaphanous subfamily. As to quaternary structure, interacts (via GBD/FH3 domain) with activated Rho-GTPases.

Formins play an important role in the nucleation of actin and the formation of linear actin filaments. This is Formin-J (forJ) from Dictyostelium discoideum (Social amoeba).